Here is a 201-residue protein sequence, read N- to C-terminus: Nascent polypeptide-associated complex subunit alpha (201 aa).

The span at 1-20 (MANPRVEELPDEEVKKTVVD) shows a compositional bias: basic and acidic residues. Disordered stretches follow at residues 1-51 (MANP…SRNE) and 118-165 (AQQL…IEDK). The span at 21-36 (DHDDDSSSDSDGEEET) shows a compositional bias: acidic residues. An NAC-A/B domain is found at 48 to 113 (SRNEKKARKA…AKIEDLNASA (66 aa)). Residues 126–149 (GHDHDHAGHSHGEAKASEGDAKKE) are compositionally biased toward basic and acidic residues. Residues 150-161 (EEDDDEEVDADG) show a composition bias toward acidic residues. One can recognise a UBA domain in the interval 162–200 (IEDKDIELVMTQAGVSRTKAIKALKENDNDIVNSIMALS).

The protein belongs to the NAC-alpha family. As to quaternary structure, part of the nascent polypeptide-associated complex (NAC), consisting of EGD2 and EGD1. NAC associates with ribosomes via EGD1.

The protein localises to the cytoplasm. Its subcellular location is the nucleus. Its function is as follows. Component of the nascent polypeptide-associated complex (NAC), a dynamic component of the ribosomal exit tunnel, protecting the emerging polypeptides from interaction with other cytoplasmic proteins to ensure appropriate nascent protein targeting. The NAC complex also promotes mitochondrial protein import by enhancing productive ribosome interactions with the outer mitochondrial membrane and blocks the inappropriate interaction of ribosomes translating non-secretory nascent polypeptides with translocation sites in the membrane of the endoplasmic reticulum. EGD2 may also be involved in transcription regulation. In Pyricularia oryzae (strain 70-15 / ATCC MYA-4617 / FGSC 8958) (Rice blast fungus), this protein is Nascent polypeptide-associated complex subunit alpha (EGD2).